The primary structure comprises 370 residues: Aminomethyltransferase (370 aa).

The protein belongs to the GcvT family. In terms of assembly, the glycine cleavage system is composed of four proteins: P, T, L and H.

The catalysed reaction is N(6)-[(R)-S(8)-aminomethyldihydrolipoyl]-L-lysyl-[protein] + (6S)-5,6,7,8-tetrahydrofolate = N(6)-[(R)-dihydrolipoyl]-L-lysyl-[protein] + (6R)-5,10-methylene-5,6,7,8-tetrahydrofolate + NH4(+). In terms of biological role, the glycine cleavage system catalyzes the degradation of glycine. This Prochlorococcus marinus (strain AS9601) protein is Aminomethyltransferase.